We begin with the raw amino-acid sequence, 843 residues long: Protein kintoun (843 aa).

Disordered stretches follow at residues 212 to 242 (PTAE…VHPM), 371 to 417 (FSRE…PVHS), 545 to 672 (YTVK…GASQ), and 761 to 843 (KKNQ…DDVM). Serine 376 bears the Phosphoserine mark. Over residues 387–397 (PVEEEEADADL) the composition is skewed to acidic residues. Residues 564–573 (VKFDHNKESL) are compositionally biased toward basic and acidic residues. A compositionally biased stretch (acidic residues) spans 584-593 (TEEDEVEEQH). A compositionally biased stretch (basic residues) spans 605–619 (QNKKPSKKQRKRNKK). A compositionally biased stretch (polar residues) spans 658–671 (YSECNDSSVGSGAS). Residues 761–775 (KKNQKRRDLKLRAQQ) show a composition bias toward basic residues. Serine 779 is modified (phosphoserine).

It belongs to the PIH1 family. Kintoun subfamily. Interacts with Pp1alpha-96A, Pp1-87B, Pp1-13C and flw.

It localises to the cytoplasm. Its function is as follows. Required for cytoplasmic pre-assembly of axonemal dyneins, thereby playing a central role in motility in cilia and flagella. Involved in pre-assembly of dynein arm complexes in the cytoplasm before intraflagellar transport loads them for the ciliary compartment. The chain is Protein kintoun from Drosophila ananassae (Fruit fly).